The primary structure comprises 274 residues: MNKTAIALLALLASSASLAATPWQKITQPVPGSAQSIGSFSNGCIVGADTLPIQSEHYQVMRTDLRRYFGHPDLVMFIQRLSSQVSNLGMGTVLIGDMGMPAGGRFNGGHASHQTGLDVDIFLQLPKTRWTSAQLLRPQALDLVSRDGKHVVPTLWKPEIFSLIKLAAQDKDVTRIFVNPAIKQQLCLDAGTDRDWLRKVRPWFQHRAHMHVRLRCPADSLECEDQPLPPPGDGCGAELQSWFEPPKPGTTKPEKKTPPPLPPSCQALLDEHVI.

Positions 1 to 19 (MNKTAIALLALLASSASLA) are cleaved as a signal peptide. 3 disulfide bridges follow: Cys44–Cys265, Cys187–Cys235, and Cys216–Cys223. Residues His110, His113, Asp120, Asp147, His150, and His211 each contribute to the Zn(2+) site. A disordered region spans residues 227-274 (PLPPPGDGCGAELQSWFEPPKPGTTKPEKKTPPPLPPSCQALLDEHVI).

This sequence belongs to the peptidase M74 family. Dimer. The cofactor is Zn(2+).

Its subcellular location is the periplasm. Functionally, murein endopeptidase that cleaves the D-alanyl-meso-2,6-diamino-pimelyl amide bond that connects peptidoglycan strands. Likely plays a role in the removal of murein from the sacculus. The sequence is that of Penicillin-insensitive murein endopeptidase from Escherichia coli (strain SE11).